Here is a 490-residue protein sequence, read N- to C-terminus: Sushi domain-containing protein 4 (490 aa).

Positions 1 to 21 are disordered; sequence MYHGMNPSNGDGFLEQQQQQQ. An N-terminal signal peptide occupies residues 1–41; it reads MYHGMNPSNGDGFLEQQQQQQQPQSPQRLLAVILWFQLALC. Residues 42–319 lie on the Extracellular side of the membrane; sequence FGPAQLTGGF…PSTHETLLTT (278 aa). Sushi domains lie at 55–119, 120–179, 178–239, and 241–304; these read QVCA…ICVQ, EDCR…ICQG, QGCL…RCLA, and EVCP…YCIK. Cystine bridges form between Cys-57-Cys-99, Cys-85-Cys-117, Cys-122-Cys-165, Cys-147-Cys-177, Cys-180-Cys-224, Cys-210-Cys-237, Cys-243-Cys-289, and Cys-274-Cys-302. Asn-104 and Asn-134 each carry an N-linked (GlcNAc...) asparagine glycan. N-linked (GlcNAc...) asparagine glycosylation is present at Asn-192. Residues 320–340 traverse the membrane as a helical segment; sequence WKIVAFTATSVLLVLLLVILA. Residues 341–490 lie on the Cytoplasmic side of the membrane; the sequence is RMFQTKFKAH…DEIPLMEEDP (150 aa). The tract at residues 401-490 is disordered; sequence GCPLPVDDQS…DEIPLMEEDP (90 aa). A compositionally biased stretch (polar residues) spans 430–456; sequence CDSVSGSSELLQSLYSPPRCQESTHPA. The segment covering 479–490 has biased composition (acidic residues); sequence IADEIPLMEEDP.

As to expression, isoform 3 is the predominant isoform in all tissues except cortex, cerebellum, kidney, and breast. Isoform 1 is found primarily in the esophagus and the brain.

It localises to the membrane. It is found in the secreted. Its function is as follows. Acts as a complement inhibitor by disrupting the formation of the classical C3 convertase. Isoform 3 inhibits the classical complement pathway, while membrane-bound isoform 1 inhibits deposition of C3b via both the classical and alternative complement pathways. In Homo sapiens (Human), this protein is Sushi domain-containing protein 4 (SUSD4).